Consider the following 494-residue polypeptide: Glucose-6-phosphate 1-dehydrogenase (494 aa).

The NADP(+) site is built by Arg-46 and Lys-150. His-180, Lys-184, Glu-218, and Asp-237 together coordinate substrate. His-242 acts as the Proton acceptor in catalysis. Lys-342 is a binding site for substrate.

This sequence belongs to the glucose-6-phosphate dehydrogenase family.

It catalyses the reaction D-glucose 6-phosphate + NADP(+) = 6-phospho-D-glucono-1,5-lactone + NADPH + H(+). The protein operates within carbohydrate degradation; pentose phosphate pathway; D-ribulose 5-phosphate from D-glucose 6-phosphate (oxidative stage): step 1/3. Functionally, catalyzes the oxidation of glucose 6-phosphate to 6-phosphogluconolactone. This Aggregatibacter actinomycetemcomitans (Actinobacillus actinomycetemcomitans) protein is Glucose-6-phosphate 1-dehydrogenase.